We begin with the raw amino-acid sequence, 97 residues long: MDFSQLGGLLDGMKKEFSQLEEKNKDTIHTSKSGGGMVSVSFNGVGELVDLQIDDSLLEDKEAMQIYLMSALNDGYKAVEENRKNLAFNMLGNFAKL.

The protein belongs to the YbaB/EbfC family. In terms of assembly, homodimer.

It localises to the cytoplasm. The protein resides in the nucleoid. Functionally, binds to DNA and alters its conformation. May be involved in regulation of gene expression, nucleoid organization and DNA protection. In Helicobacter pylori (strain HPAG1), this protein is Nucleoid-associated protein HPAG1_0033.